The primary structure comprises 570 residues: Proline--tRNA ligase (570 aa).

Belongs to the class-II aminoacyl-tRNA synthetase family. ProS type 1 subfamily. Homodimer.

It localises to the cytoplasm. The enzyme catalyses tRNA(Pro) + L-proline + ATP = L-prolyl-tRNA(Pro) + AMP + diphosphate. In terms of biological role, catalyzes the attachment of proline to tRNA(Pro) in a two-step reaction: proline is first activated by ATP to form Pro-AMP and then transferred to the acceptor end of tRNA(Pro). As ProRS can inadvertently accommodate and process non-cognate amino acids such as alanine and cysteine, to avoid such errors it has two additional distinct editing activities against alanine. One activity is designated as 'pretransfer' editing and involves the tRNA(Pro)-independent hydrolysis of activated Ala-AMP. The other activity is designated 'posttransfer' editing and involves deacylation of mischarged Ala-tRNA(Pro). The misacylated Cys-tRNA(Pro) is not edited by ProRS. In Desulfotalea psychrophila (strain LSv54 / DSM 12343), this protein is Proline--tRNA ligase.